The chain runs to 260 residues: Indole-3-glycerol phosphate synthase (260 aa).

It belongs to the TrpC family.

The catalysed reaction is 1-(2-carboxyphenylamino)-1-deoxy-D-ribulose 5-phosphate + H(+) = (1S,2R)-1-C-(indol-3-yl)glycerol 3-phosphate + CO2 + H2O. It functions in the pathway amino-acid biosynthesis; L-tryptophan biosynthesis; L-tryptophan from chorismate: step 4/5. The sequence is that of Indole-3-glycerol phosphate synthase from Bacteroides thetaiotaomicron (strain ATCC 29148 / DSM 2079 / JCM 5827 / CCUG 10774 / NCTC 10582 / VPI-5482 / E50).